The sequence spans 79 residues: Raniseptin-3 (79 aa).

Positions 1–22 are cleaved as a signal peptide; sequence MAFLKKSLFLVLFLGIVSLSIC. The propeptide occupies 23–49; that stretch reads EEEKREGEEEEKQEEENEELSEEELRE.

This sequence belongs to the frog skin active peptide (FSAP) family. Dermaseptin subfamily. Expressed by the skin glands.

It is found in the secreted. Its function is as follows. Has antibacterial activity. The chain is Raniseptin-3 from Boana raniceps (Chaco tree frog).